A 119-amino-acid chain; its full sequence is Putative F420H(2)-dependent quinone reductase Rv3178 (119 aa).

Residues 21-23, 27-32, 43-46, and 54-58 contribute to the coenzyme F420-(gamma-Glu)n site; these read RKS, FVAPLL, VASA, and QWYRN.

It belongs to the F420H(2)-dependent quinone reductase family.

The protein resides in the cell membrane. It catalyses the reaction oxidized coenzyme F420-(gamma-L-Glu)(n) + a quinol + H(+) = reduced coenzyme F420-(gamma-L-Glu)(n) + a quinone. Involved in a F420-dependent anti-oxidant mechanism that protects M.tuberculosis against oxidative stress and bactericidal agents. Catalyzes the F420H(2)-dependent two-electron reduction of quinones to dihydroquinones, thereby preventing the formation of cytotoxic semiquinones obtained by the one-electron reduction pathway. Since menaquinone is the sole quinone electron carrier in the respiratory chain in M.tuberculosis, the physiological electron acceptor for Fqr-mediated F420H(2) oxidation is therefore likely to be the endogenous menaquinone found in the membrane fraction of M.tuberculosis. The sequence is that of Putative F420H(2)-dependent quinone reductase Rv3178 from Mycobacterium tuberculosis (strain ATCC 25618 / H37Rv).